Consider the following 217-residue polypeptide: Transcriptional regulator NovE (217 aa).

The disordered stretch occupies residues 1–41; that stretch reads MVASGRTASKGRGNGATPVRPTAGDATPVDSGQPSDTTYGG.

Functionally, transcription regulator that specifically regulates expression of genes involved in the novobiocin biosynthesis pathway. Probably acts as a positive regulator of transcription. Does not bind DNA. The polypeptide is Transcriptional regulator NovE (novE) (Streptomyces niveus (Streptomyces spheroides)).